Reading from the N-terminus, the 349-residue chain is 11-beta-hydroxysteroid dehydrogenase 1A (349 aa).

A helical; Signal-anchor for type II membrane protein transmembrane segment spans residues 10-30; it reads LTAPFFTFFGLCFFLPPFYFF. Residues 54 to 80 and Asp-105 each bind NADP(+); that span reads GASS…TARR. Ser-184 contacts substrate. Tyr-197 (proton acceptor) is an active-site residue. Residues 197 to 201 and Lys-201 contribute to the NADP(+) site; that span reads YNASK.

It belongs to the short-chain dehydrogenases/reductases (SDR) family. Expressed in the above-ground part of seedlings, especially in the vascular tissues. Also detected in the buds and silique pedicels. Highly induced in oil-accumulating tissues of maturing seeds.

The protein resides in the lipid droplet. Its subcellular location is the membrane. It carries out the reaction an 11beta-hydroxysteroid + NADP(+) = an 11-oxosteroid + NADPH + H(+). The catalysed reaction is 17beta-estradiol + NADP(+) = estrone + NADPH + H(+). It catalyses the reaction corticosterone + NADP(+) = 11-dehydrocorticosterone + NADPH + H(+). The enzyme catalyses cortisone + NADPH + H(+) = cortisol + NADP(+). Its function is as follows. Catalyzes 11-beta, 17-beta-hydroxysteroid and reduces 17-beta-ketosteroids. Involved in regulating plant growth and development, probably promoting or mediating brassinosteroid effects. Plays a role during seed maturation. The chain is 11-beta-hydroxysteroid dehydrogenase 1A (HSD1) from Arabidopsis thaliana (Mouse-ear cress).